Consider the following 195-residue polypeptide: Peptidyl-tRNA hydrolase (195 aa).

Y17 is a tRNA binding site. H22 (proton acceptor) is an active-site residue. F68, N70, and N116 together coordinate tRNA.

Belongs to the PTH family. In terms of assembly, monomer.

Its subcellular location is the cytoplasm. The catalysed reaction is an N-acyl-L-alpha-aminoacyl-tRNA + H2O = an N-acyl-L-amino acid + a tRNA + H(+). Functionally, hydrolyzes ribosome-free peptidyl-tRNAs (with 1 or more amino acids incorporated), which drop off the ribosome during protein synthesis, or as a result of ribosome stalling. Catalyzes the release of premature peptidyl moieties from peptidyl-tRNA molecules trapped in stalled 50S ribosomal subunits, and thus maintains levels of free tRNAs and 50S ribosomes. This chain is Peptidyl-tRNA hydrolase, found in Shewanella denitrificans (strain OS217 / ATCC BAA-1090 / DSM 15013).